Consider the following 119-residue polypeptide: Large ribosomal subunit protein uL18 (119 aa).

The protein belongs to the universal ribosomal protein uL18 family. In terms of assembly, part of the 50S ribosomal subunit; part of the 5S rRNA/L5/L18/L25 subcomplex. Contacts the 5S and 23S rRNAs.

Its function is as follows. This is one of the proteins that bind and probably mediate the attachment of the 5S RNA into the large ribosomal subunit, where it forms part of the central protuberance. The protein is Large ribosomal subunit protein uL18 of Borrelia hermsii (strain HS1 / DAH).